We begin with the raw amino-acid sequence, 391 residues long: Arginine biosynthesis bifunctional protein ArgJ (391 aa).

Positions 149, 172, 183, 263, 386, and 391 each coordinate substrate. The active-site Nucleophile is T183.

It belongs to the ArgJ family. In terms of assembly, heterotetramer of two alpha and two beta chains.

The protein resides in the cytoplasm. The enzyme catalyses N(2)-acetyl-L-ornithine + L-glutamate = N-acetyl-L-glutamate + L-ornithine. It catalyses the reaction L-glutamate + acetyl-CoA = N-acetyl-L-glutamate + CoA + H(+). The protein operates within amino-acid biosynthesis; L-arginine biosynthesis; L-ornithine and N-acetyl-L-glutamate from L-glutamate and N(2)-acetyl-L-ornithine (cyclic): step 1/1. Its pathway is amino-acid biosynthesis; L-arginine biosynthesis; N(2)-acetyl-L-ornithine from L-glutamate: step 1/4. In terms of biological role, catalyzes two activities which are involved in the cyclic version of arginine biosynthesis: the synthesis of N-acetylglutamate from glutamate and acetyl-CoA as the acetyl donor, and of ornithine by transacetylation between N(2)-acetylornithine and glutamate. The sequence is that of Arginine biosynthesis bifunctional protein ArgJ from Bifidobacterium longum (strain NCC 2705).